Consider the following 481-residue polypeptide: Glutamate--tRNA ligase 1 (481 aa).

Residues Pro11–Gly21 carry the 'HIGH' region motif. Residues Lys244–Arg248 carry the 'KMSKS' region motif. Lys247 is an ATP binding site.

This sequence belongs to the class-I aminoacyl-tRNA synthetase family. Glutamate--tRNA ligase type 1 subfamily. As to quaternary structure, monomer.

The protein resides in the cytoplasm. It carries out the reaction tRNA(Glu) + L-glutamate + ATP = L-glutamyl-tRNA(Glu) + AMP + diphosphate. In terms of biological role, catalyzes the attachment of glutamate to tRNA(Glu) in a two-step reaction: glutamate is first activated by ATP to form Glu-AMP and then transferred to the acceptor end of tRNA(Glu). The polypeptide is Glutamate--tRNA ligase 1 (Caldanaerobacter subterraneus subsp. tengcongensis (strain DSM 15242 / JCM 11007 / NBRC 100824 / MB4) (Thermoanaerobacter tengcongensis)).